Consider the following 132-residue polypeptide: EF-hand calcium-binding domain-containing protein 10 (132 aa).

EF-hand domains are found at residues methionine 64–cysteine 99 and glutamate 120–phenylalanine 132.

The sequence is that of EF-hand calcium-binding domain-containing protein 10 (Efcab10) from Mus musculus (Mouse).